Consider the following 331-residue polypeptide: Vitamin B12 import system permease protein BtuC (331 aa).

A run of 9 helical transmembrane segments spans residues 18-38 (WLFGLTLLLLVTLLISLCAGE), 64-84 (LAVLLVGAALALSGAIMQALF), 91-111 (PGLLGISNGAGVGLIAAVLLG), 114-134 (VLPGWALGLCAIFGALLITFI), 149-169 (LLAGVALGIICSALMTWAVYF), 194-214 (LWLMIALLPVLCWVCLQSQPL), 243-263 (GWMVGVSVALAGAIGFIGLVI), 277-297 (VLLPACMMAGASALLGADIIA), and 305-325 (ELPIGVVTATLGAPVFIWLLL).

Belongs to the binding-protein-dependent transport system permease family. FecCD subfamily. As to quaternary structure, the complex is composed of two ATP-binding proteins (BtuD), two transmembrane proteins (BtuC) and a solute-binding protein (BtuF).

Its subcellular location is the cell inner membrane. Functionally, part of the ABC transporter complex BtuCDF involved in vitamin B12 import. Involved in the translocation of the substrate across the membrane. The protein is Vitamin B12 import system permease protein BtuC of Klebsiella pneumoniae subsp. pneumoniae (strain ATCC 700721 / MGH 78578).